The chain runs to 120 residues: UPF0231 protein ETA_08290 (120 aa).

This sequence belongs to the UPF0231 family.

This is UPF0231 protein ETA_08290 from Erwinia tasmaniensis (strain DSM 17950 / CFBP 7177 / CIP 109463 / NCPPB 4357 / Et1/99).